A 424-amino-acid polypeptide reads, in one-letter code: Elongation factor 1-alpha (424 aa).

Positions Lys5–Ile223 constitute a tr-type G domain. Residues Gly14–Ser21 are G1. Residue Gly14–Ser21 participates in GTP binding. Residue Ser21 coordinates Mg(2+). Positions Gly70–Asp74 are G2. Residues Asp91–Gly94 are G3. GTP is bound by residues Asp91–His95 and Asn148–Asp151. The tract at residues Asn148–Asp151 is G4. The interval Ser187 to Tyr189 is G5.

The protein belongs to the TRAFAC class translation factor GTPase superfamily. Classic translation factor GTPase family. EF-Tu/EF-1A subfamily.

Its subcellular location is the cytoplasm. It catalyses the reaction GTP + H2O = GDP + phosphate + H(+). Its function is as follows. GTP hydrolase that promotes the GTP-dependent binding of aminoacyl-tRNA to the A-site of ribosomes during protein biosynthesis. This is Elongation factor 1-alpha from Thermoplasma acidophilum (strain ATCC 25905 / DSM 1728 / JCM 9062 / NBRC 15155 / AMRC-C165).